Reading from the N-terminus, the 117-residue chain is Photosystem II reaction center Psb28 protein (117 aa).

It belongs to the Psb28 family. As to quaternary structure, part of the photosystem II complex.

The protein localises to the cellular thylakoid membrane. This chain is Photosystem II reaction center Psb28 protein, found in Prochlorococcus marinus (strain MIT 9312).